A 481-amino-acid chain; its full sequence is Arf-GAP domain and FG repeat-containing protein 2 (481 aa).

The Arf-GAP domain maps to 27 to 153 (EVWCRRVREL…WYVPPDQVKG (127 aa)). The C4-type zinc-finger motif lies at 47-70 (CFECAQRGVTYVDITVGSFVCTTC). 3 disordered regions span residues 150–220 (QVKG…SVKK), 271–309 (SSVF…APAS), and 431–481 (QQNG…NPFL). Polar residues predominate over residues 157–166 (TKGSASTPVQ). At Lys-173 the chain carries N6-acetyllysine. Polar residues-rich tracts occupy residues 188–210 (VAAS…ARST), 283–298 (ASFQ…SQGT), and 454–481 (AGIS…NPFL).

In terms of assembly, interacts with EPS15R.

The polypeptide is Arf-GAP domain and FG repeat-containing protein 2 (AGFG2) (Homo sapiens (Human)).